The sequence spans 187 residues: PBAN-type neuropeptides (187 aa).

A signal peptide spans 1-22 (MSRFYFFFNLICLYLAIKSALS). Residues 23–64 (AELDTNDQKYADLRTTGRGESPDSTGPDSDTLRRDDGAEGLN) constitute a propeptide that is removed on maturation. Over residues 34-43 (DLRTTGRGES) the composition is skewed to basic and acidic residues. The tract at residues 34 to 58 (DLRTTGRGESPDSTGPDSDTLRRDD) is disordered. The residue at position 76 (Leu76) is a Leucine amide. The propeptide occupies 80–127 (TIAADLHDDLVEEFDAEPLGYAGEPPQKLATELVQGAPYMVLLVTAKP). The tract at residues 132 to 163 (PIFYHTTSPRLGRRDSVGENHQRPPFAPRLGR) is disordered. Leucine amide is present on Leu142. Positions 143-153 (GRRDSVGENHQ) are enriched in basic and acidic residues. Leucine amide is present on residues Leu161 and Leu171. Positions 174–187 (SYNGGYPLPFQFAY) are excised as a propeptide.

Belongs to the pyrokinin family.

Its subcellular location is the secreted. Its function is as follows. A hormone that controls sex pheromone production in females and pheromone responsiveness in male. Also mediates visceral muscle contractile activity (myotropic activity). This is PBAN-type neuropeptides from Anopheles gambiae (African malaria mosquito).